A 697-amino-acid chain; its full sequence is Putative flagellar export/assembly protein LfhA (697 aa).

7 consecutive transmembrane segments (helical) span residues 19–39 (VPLV…PALL), 40–60 (DILF…AVSA), 66–86 (FSLF…LNVA), 116–136 (GNFV…FIVV), 204–224 (AIAG…IGIF), 242–262 (IGDG…AAII), and 280–302 (LLAS…VVPG).

This sequence belongs to the FHIPEP (flagella/HR/invasion proteins export pore) family.

The protein localises to the cell inner membrane. Functionally, part of the flagellar gene cluster Flag-2. However, the Flag-2 flagellar system could be inactive in strain 042 due to a frameshift in lfgC. The chain is Putative flagellar export/assembly protein LfhA from Escherichia coli O44:H18 (strain 042 / EAEC).